The primary structure comprises 680 residues: Probable oxidoreductase YoaE (680 aa).

Residues 9–66 form the 4Fe-4S Mo/W bis-MGD-type domain; it reads NGIFKSVCSLDCPDQCGLLIHKKDGKIVKVQGDPDHPVTAGNICNKVRNMTERIYDEK. C16, C20, C24, and C52 together coordinate [4Fe-4S] cluster.

Belongs to the prokaryotic molybdopterin-containing oxidoreductase family. The cofactor is Mo-bis(molybdopterin guanine dinucleotide).

This chain is Probable oxidoreductase YoaE (yoaE), found in Bacillus subtilis (strain 168).